Consider the following 186-residue polypeptide: uncharacterized protein (186 aa).

This is an uncharacterized protein from Caenorhabditis elegans.